A 249-amino-acid polypeptide reads, in one-letter code: MNVLSCSINTLIKEGLYEISGVEVGQHFYWQIGGFQVHAQVLITSWVVIAILLGSAVIAIRNPQTIPTDGQNFFEFVLEFIRDVSQTQIGEEYGPWVPFIGTLFLFIFVSNWSGALLPWKIIQLPQGELAAPTNDINTTVALALLTSVAYFYAGLSKKGLGYFSKYIQPTPILLPINILEDFTKPLSLSFRLFGNILADELVVVVLVSLVPLVVPIPVMFLGLFTSGIQALIFATLAAAYIGESMEGHH.

5 consecutive transmembrane segments (helical) span residues 40 to 60 (QVLI…VIAI), 97 to 117 (VPFI…GALL), 136 to 156 (INTT…AGLS), 201 to 221 (LVVV…VMFL), and 222 to 242 (GLFT…AYIG).

Belongs to the ATPase A chain family. As to quaternary structure, F-type ATPases have 2 components, CF(1) - the catalytic core - and CF(0) - the membrane proton channel. CF(1) has five subunits: alpha(3), beta(3), gamma(1), delta(1), epsilon(1). CF(0) has four main subunits: a, b, b' and c.

The protein resides in the plastid. Its subcellular location is the chloroplast thylakoid membrane. Functionally, key component of the proton channel; it plays a direct role in the translocation of protons across the membrane. This chain is ATP synthase subunit a, chloroplastic, found in Barbarea verna (Land cress).